A 185-amino-acid polypeptide reads, in one-letter code: Acireductone dioxygenase (185 aa).

Fe(2+) is bound by residues His-101, His-103, Glu-107, and His-145. 4 residues coordinate Ni(2+): His-101, His-103, Glu-107, and His-145.

This sequence belongs to the acireductone dioxygenase (ARD) family. Monomer. Requires Fe(2+) as cofactor. Ni(2+) is required as a cofactor.

The catalysed reaction is 1,2-dihydroxy-5-(methylsulfanyl)pent-1-en-3-one + O2 = 3-(methylsulfanyl)propanoate + CO + formate + 2 H(+). The enzyme catalyses 1,2-dihydroxy-5-(methylsulfanyl)pent-1-en-3-one + O2 = 4-methylsulfanyl-2-oxobutanoate + formate + 2 H(+). The protein operates within amino-acid biosynthesis; L-methionine biosynthesis via salvage pathway; L-methionine from S-methyl-5-thio-alpha-D-ribose 1-phosphate: step 5/6. In terms of biological role, catalyzes 2 different reactions between oxygen and the acireductone 1,2-dihydroxy-3-keto-5-methylthiopentene (DHK-MTPene) depending upon the metal bound in the active site. Fe-containing acireductone dioxygenase (Fe-ARD) produces formate and 2-keto-4-methylthiobutyrate (KMTB), the alpha-ketoacid precursor of methionine in the methionine recycle pathway. Ni-containing acireductone dioxygenase (Ni-ARD) produces methylthiopropionate, carbon monoxide and formate, and does not lie on the methionine recycle pathway. This chain is Acireductone dioxygenase, found in Synechococcus sp. (strain RCC307).